Consider the following 321-residue polypeptide: Lipoyl synthase (321 aa).

[4Fe-4S] cluster is bound by residues Cys-68, Cys-73, Cys-79, Cys-94, Cys-98, Cys-101, and Ser-308. The 218-residue stretch at 80-297 (FNHGTATFMI…KAIALDLGFT (218 aa)) folds into the Radical SAM core domain.

Belongs to the radical SAM superfamily. Lipoyl synthase family. [4Fe-4S] cluster is required as a cofactor.

It localises to the cytoplasm. The catalysed reaction is [[Fe-S] cluster scaffold protein carrying a second [4Fe-4S](2+) cluster] + N(6)-octanoyl-L-lysyl-[protein] + 2 oxidized [2Fe-2S]-[ferredoxin] + 2 S-adenosyl-L-methionine + 4 H(+) = [[Fe-S] cluster scaffold protein] + N(6)-[(R)-dihydrolipoyl]-L-lysyl-[protein] + 4 Fe(3+) + 2 hydrogen sulfide + 2 5'-deoxyadenosine + 2 L-methionine + 2 reduced [2Fe-2S]-[ferredoxin]. It functions in the pathway protein modification; protein lipoylation via endogenous pathway; protein N(6)-(lipoyl)lysine from octanoyl-[acyl-carrier-protein]: step 2/2. Functionally, catalyzes the radical-mediated insertion of two sulfur atoms into the C-6 and C-8 positions of the octanoyl moiety bound to the lipoyl domains of lipoate-dependent enzymes, thereby converting the octanoylated domains into lipoylated derivatives. The chain is Lipoyl synthase from Tolumonas auensis (strain DSM 9187 / NBRC 110442 / TA 4).